Reading from the N-terminus, the 285-residue chain is Sulfotransferase 2A6 (285 aa).

44-49 (KSGTNW) contacts 3'-phosphoadenylyl sulfate. The active-site Proton acceptor is the His99. 3'-phosphoadenylyl sulfate is bound by residues Arg121, Ser129, Tyr184, 218–223 (SSFQAM), and 247–249 (RKG).

It belongs to the sulfotransferase 1 family. As to quaternary structure, oligomer.

Its subcellular location is the cytoplasm. The protein resides in the cytosol. It carries out the reaction an alcohol + 3'-phosphoadenylyl sulfate = an alkyl sulfate + adenosine 3',5'-bisphosphate + H(+). The enzyme catalyses glycolithocholate + 3'-phosphoadenylyl sulfate = sulfoglycolithocholate + adenosine 3',5'-bisphosphate + H(+). It catalyses the reaction taurolithocholate + 3'-phosphoadenylyl sulfate = taurolithocholate 3-sulfate + adenosine 3',5'-bisphosphate + H(+). The catalysed reaction is 3beta-hydroxyandrost-5-en-17-one + 3'-phosphoadenylyl sulfate = dehydroepiandrosterone 3-sulfate + adenosine 3',5'-bisphosphate + H(+). Functionally, sulfotransferase that utilizes 3'-phospho-5'-adenylyl sulfate (PAPS) as sulfonate donor to catalyze the sulfonation of the hydroxyl group of hydroxysteroids and bile acids. In Mus musculus (Mouse), this protein is Sulfotransferase 2A6.